The following is a 157-amino-acid chain: 3-dehydroquinate dehydratase (157 aa).

The active-site Proton acceptor is tyrosine 22. 3 residues coordinate substrate: asparagine 73, histidine 79, and aspartate 86. Histidine 99 serves as the catalytic Proton donor. Substrate-binding positions include 100–101 and arginine 110; that span reads LS.

The protein belongs to the type-II 3-dehydroquinase family. As to quaternary structure, homododecamer.

The enzyme catalyses 3-dehydroquinate = 3-dehydroshikimate + H2O. It participates in metabolic intermediate biosynthesis; chorismate biosynthesis; chorismate from D-erythrose 4-phosphate and phosphoenolpyruvate: step 3/7. Its function is as follows. Catalyzes a trans-dehydration via an enolate intermediate. This Roseiflexus castenholzii (strain DSM 13941 / HLO8) protein is 3-dehydroquinate dehydratase.